The following is a 1405-amino-acid chain: DNA-directed RNA polymerase subunit beta' (1405 aa).

4 residues coordinate Zn(2+): cysteine 71, cysteine 73, cysteine 86, and cysteine 89. Mg(2+)-binding residues include aspartate 462, aspartate 464, and aspartate 466. Positions 820, 893, 900, and 903 each coordinate Zn(2+).

This sequence belongs to the RNA polymerase beta' chain family. As to quaternary structure, the RNAP catalytic core consists of 2 alpha, 1 beta, 1 beta' and 1 omega subunit. When a sigma factor is associated with the core the holoenzyme is formed, which can initiate transcription. Mg(2+) is required as a cofactor. Requires Zn(2+) as cofactor.

The enzyme catalyses RNA(n) + a ribonucleoside 5'-triphosphate = RNA(n+1) + diphosphate. Functionally, DNA-dependent RNA polymerase catalyzes the transcription of DNA into RNA using the four ribonucleoside triphosphates as substrates. The polypeptide is DNA-directed RNA polymerase subunit beta' (Methylorubrum extorquens (strain CM4 / NCIMB 13688) (Methylobacterium extorquens)).